We begin with the raw amino-acid sequence, 257 residues long: Aspartate/glutamate leucyltransferase (257 aa).

The protein belongs to the R-transferase family. Bpt subfamily.

The protein localises to the cytoplasm. It catalyses the reaction N-terminal L-glutamyl-[protein] + L-leucyl-tRNA(Leu) = N-terminal L-leucyl-L-glutamyl-[protein] + tRNA(Leu) + H(+). It carries out the reaction N-terminal L-aspartyl-[protein] + L-leucyl-tRNA(Leu) = N-terminal L-leucyl-L-aspartyl-[protein] + tRNA(Leu) + H(+). Its function is as follows. Functions in the N-end rule pathway of protein degradation where it conjugates Leu from its aminoacyl-tRNA to the N-termini of proteins containing an N-terminal aspartate or glutamate. This Leptospira interrogans serogroup Icterohaemorrhagiae serovar copenhageni (strain Fiocruz L1-130) protein is Aspartate/glutamate leucyltransferase.